A 427-amino-acid chain; its full sequence is Protein adenylyltransferase Fic (427 aa).

Residues Leu-17–Phe-37 traverse the membrane as a helical segment. TPR repeat units follow at residues Ala-77–His-110 and Pro-111–Asp-143. Residues Ser-200–Gly-205 carry the Inhibitory (S/T)XXXE(G/N) motif motif. ATP is bound by residues Glu-204 and Val-286–His-289. In terms of domain architecture, Fido spans Ile-255–Arg-390. His-333 is a catalytic residue. Residues Asp-337 to Arg-344, Tyr-369 to Tyr-370, and Asn-377 each bind ATP.

Belongs to the fic family. As to quaternary structure, homodimer.

The protein localises to the membrane. It carries out the reaction L-tyrosyl-[protein] + ATP = O-(5'-adenylyl)-L-tyrosyl-[protein] + diphosphate. It catalyses the reaction L-threonyl-[protein] + ATP = 3-O-(5'-adenylyl)-L-threonyl-[protein] + diphosphate. The enzyme catalyses 3-O-(5'-adenylyl)-L-threonyl-[protein] + H2O = L-threonyl-[protein] + AMP + H(+). With respect to regulation, the side chain of Glu-204 determines which of the two opposing activities (AMPylase or de-AMPylase) will take place. In response to endoplasmic reticulum stress, mediates de-AMPylase activity. Adenylyltransferase activity is inhibited by the inhibitory helix present at the N-terminus: Glu-204 binds ATP and competes with ATP-binding at Arg-344, thereby preventing adenylyltransferase activity. In unstressed cells, disengagement of Glu-204 promotes adenylyltransferase activity. Activation dissociates ATP-binding from Glu-204, allowing ordered binding of the entire ATP moiety with the alpha-phosphate in an orientation that is productive for accepting an incoming target hydroxyl side chain. Its function is as follows. Protein that can both mediate the addition of adenosine 5'-monophosphate (AMP) to specific residues of target proteins (AMPylation), and the removal of the same modification from target proteins (de-AMPylation), depending on the context. The side chain of Glu-204 determines which of the two opposing activities (AMPylase or de-AMPylase) will take place. Acts as a key regulator of the unfolded protein response (UPR) by mediating AMPylation or de-AMPylation of Hsc70-3/BiP. In unstressed cells, acts as an adenylyltransferase by mediating AMPylation of Hsc70-3/BiP, thereby inactivating it. In response to endoplasmic reticulum stress, acts as a phosphodiesterase by mediating removal of ATP (de-AMPylation) from Hsc70-3/BiP, leading to restore HSPA5/BiP activity. In Nematostella vectensis (Starlet sea anemone), this protein is Protein adenylyltransferase Fic.